A 978-amino-acid chain; its full sequence is Macrophage colony-stimulating factor 1 receptor (978 aa).

The first 19 residues, 1-19, serve as a signal peptide directing secretion; the sequence is MELGPPLVLLLATVWHGQG. At 20–515 the chain is on the extracellular side; the sequence is APVIEPSGPE…QLPDESLFTP (496 aa). Ig-like C2-type domains are found at residues 24 to 104, 107 to 197, 204 to 298, 299 to 397, and 398 to 503; these read EPSG…VKDP, SWNL…KVNR, QIKL…VVES, AYLN…LTLR, and YPPE…SLGQ. Intrachain disulfides connect C42–C84, C127–C177, and C224–C278. N-linked (GlcNAc...) asparagine glycosylation is found at N45 and N73. N302, N335, N389, N410, N449, N478, and N491 each carry an N-linked (GlcNAc...) asparagine glycan. C417 and C483 form a disulfide bridge. Residues 516–536 traverse the membrane as a helical segment; it reads VVVACMSVMSLLVLLLLLLLY. Residues 537 to 978 are Cytoplasmic-facing; the sequence is KYKQKPKYQV…LQPNNYQFAC (442 aa). Residues 540 to 572 are regulatory juxtamembrane domain; it reads QKPKYQVRWKIIERYEGNSYTFIDPTQLPYNEK. A phosphotyrosine; by autocatalysis mark is found at Y544 and Y559. In terms of domain architecture, Protein kinase spans 580-914; the sequence is LQFGKTLGAG…CFLLQEQARL (335 aa). ATP contacts are provided by residues 586–594 and K614; that span reads LGAGAFGKV. Y697 and Y706 each carry phosphotyrosine; by autocatalysis. A Phosphoserine modification is found at S711. The residue at position 721 (Y721) is a Phosphotyrosine; by autocatalysis. D776 (proton acceptor) is an active-site residue. The interval 794-816 is activation loop; that stretch reads DFGLARDIMNDSNYVVKGNARLP. A phosphotyrosine; by autocatalysis mark is found at Y807 and Y921. The interval 921-957 is disordered; it reads YANLPSSGGSSGSDSGGGSSGGSSSEPEEESSSEHLA. Residues 929 to 941 show a composition bias toward gly residues; that stretch reads GSSGSDSGGGSSG. Y974 bears the Phosphotyrosine; by autocatalysis mark.

This sequence belongs to the protein kinase superfamily. Tyr protein kinase family. CSF-1/PDGF receptor subfamily. Monomer. Homodimer. Interacts with CSF1 and IL34. Interaction with dimeric CSF1 or IL34 leads to receptor homodimerization. Interacts with INPPL1/SHIP2 and THOC5. Interacts (tyrosine phosphorylated) with PLCG2 (via SH2 domain). Interacts (tyrosine phosphorylated) with PIK3R1 (via SH2 domain). Interacts (tyrosine phosphorylated) with FYN, YES1 and SRC (via SH2 domain). Interacts (tyrosine phosphorylated) with CBL, GRB2 and SLA2. Post-translationally, autophosphorylated in response to CSF1 or IL34 binding. Phosphorylation at Tyr-559 is important for normal down-regulation of signaling by ubiquitination, internalization and degradation. Phosphorylation at Tyr-559 and Tyr-807 is important for interaction with SRC family members, including FYN, YES1 and SRC, and for subsequent activation of these protein kinases. Phosphorylation at Tyr-697 and Tyr-921 is important for interaction with GRB2. Phosphorylation at Tyr-721 is important for interaction with PIK3R1. Phosphorylation at Tyr-721 and Tyr-807 is important for interaction with PLCG2. Phosphorylation at Tyr-974 is important for interaction with CBL. Dephosphorylation by PTPN2 negatively regulates downstream signaling and macrophage differentiation. Ubiquitinated. Becomes rapidly polyubiquitinated after autophosphorylation, leading to its degradation.

It localises to the cell membrane. The catalysed reaction is L-tyrosyl-[protein] + ATP = O-phospho-L-tyrosyl-[protein] + ADP + H(+). With respect to regulation, present in an inactive conformation in the absence of bound ligand. CSF1 or IL34 binding leads to dimerization and activation by autophosphorylation on tyrosine residues. Tyrosine-protein kinase that acts as a cell-surface receptor for CSF1 and IL34 and plays an essential role in the regulation of survival, proliferation and differentiation of hematopoietic precursor cells, especially mononuclear phagocytes, such as macrophages and monocytes. Promotes the release of pro-inflammatory chemokines in response to IL34 and CSF1, and thereby plays an important role in innate immunity and in inflammatory processes. Plays an important role in the regulation of osteoclast proliferation and differentiation, the regulation of bone resorption, and is required for normal bone and tooth development. Required for normal male and female fertility, and for normal development of milk ducts and acinar structures in the mammary gland during pregnancy. Promotes reorganization of the actin cytoskeleton, regulates formation of membrane ruffles, cell adhesion and cell migration, and promotes cancer cell invasion. Activates several signaling pathways in response to ligand binding, including the ERK1/2 and the JNK pathway. Phosphorylates PIK3R1, PLCG2, GRB2, SLA2 and CBL. Activation of PLCG2 leads to the production of the cellular signaling molecules diacylglycerol and inositol 1,4,5-trisphosphate, that then lead to the activation of protein kinase C family members, especially PRKCD. Phosphorylation of PIK3R1, the regulatory subunit of phosphatidylinositol 3-kinase, leads to activation of the AKT1 signaling pathway. Activated CSF1R also mediates activation of the MAP kinases MAPK1/ERK2 and/or MAPK3/ERK1, and of the SRC family kinases SRC, FYN and YES1. Activated CSF1R transmits signals both via proteins that directly interact with phosphorylated tyrosine residues in its intracellular domain, or via adapter proteins, such as GRB2. Promotes activation of STAT family members STAT3, STAT5A and/or STAT5B. Promotes tyrosine phosphorylation of SHC1 and INPP5D/SHIP-1. Receptor signaling is down-regulated by protein phosphatases, such as INPP5D/SHIP-1, that dephosphorylate the receptor and its downstream effectors, and by rapid internalization of the activated receptor. In the central nervous system, may play a role in the development of microglia macrophages. The chain is Macrophage colony-stimulating factor 1 receptor (Csf1r) from Rattus norvegicus (Rat).